The chain runs to 432 residues: MACKFRLLLENAEQIVVVCSKEEEYLLEDGMQHLAILEKASLVIGNDGFIKDVGPAETIRNQFSNASFENIIDCSGKCVLPGFVDAHTHPVWAGDRVHEFAMKLAGATYMDIHKAGGGINYTVEHTTTASEEELFCSFKHRLERMLRAGTTLVECKSGYGLKLETELKMLRVIERAHQELDIAVSSTYCGAHSVPKGKSAQEATDDIIANHLPALKQMALNGEIHVDNIDVFCEKGVFDLDSTRKILQAGKAIGLNLNFHGDELNPMNSAELGAELGAHAVSHLEEVSDKGIAALAKAKCSAVLLPTTAYILRLKQPRARDMLKAGVIVSLGSDFNPNAYCFSMPMVMHLACVNMKMSLKEALAAATINAAYALGRAHTHGSLEVGKQGDVVVINASRWEHVIYQFGGHQELIEYVVIKGKIVYKNENVLCL.

4-imidazolone-5-propanoate is bound by residues Tyr159 and His192. Residue Tyr159 coordinates N-formimidoyl-L-glutamate. A Fe(3+)-binding site is contributed by His260. His260 is a binding site for Zn(2+). Glu263 is a binding site for 4-imidazolone-5-propanoate. Asp334 is a binding site for Fe(3+). Zn(2+) is bound at residue Asp334. Asn336 is an N-formimidoyl-L-glutamate binding site.

It belongs to the metallo-dependent hydrolases superfamily. HutI family. Zn(2+) is required as a cofactor. It depends on Fe(3+) as a cofactor.

It catalyses the reaction 4-imidazolone-5-propanoate + H2O = N-formimidoyl-L-glutamate. It functions in the pathway amino-acid degradation; L-histidine degradation into L-glutamate; N-formimidoyl-L-glutamate from L-histidine: step 3/3. The sequence is that of Probable imidazolonepropionase (amdhd1) from Xenopus tropicalis (Western clawed frog).